The sequence spans 382 residues: 3-dehydroquinate synthase (382 aa).

Residues 115 to 119 (GVVGD), 139 to 140 (TS), Lys-152, and Lys-161 each bind NAD(+). The Zn(2+) site is built by Glu-194, His-256, and His-274.

It belongs to the sugar phosphate cyclases superfamily. Dehydroquinate synthase family. It depends on Co(2+) as a cofactor. The cofactor is Zn(2+). NAD(+) is required as a cofactor.

It is found in the cytoplasm. It catalyses the reaction 7-phospho-2-dehydro-3-deoxy-D-arabino-heptonate = 3-dehydroquinate + phosphate. The protein operates within metabolic intermediate biosynthesis; chorismate biosynthesis; chorismate from D-erythrose 4-phosphate and phosphoenolpyruvate: step 2/7. Its function is as follows. Catalyzes the conversion of 3-deoxy-D-arabino-heptulosonate 7-phosphate (DAHP) to dehydroquinate (DHQ). The sequence is that of 3-dehydroquinate synthase from Rhodopseudomonas palustris (strain BisB18).